The primary structure comprises 122 residues: ATP-dependent Clp protease adapter protein ClpS (122 aa).

The protein belongs to the ClpS family. In terms of assembly, binds to the N-terminal domain of the chaperone ClpA.

Functionally, involved in the modulation of the specificity of the ClpAP-mediated ATP-dependent protein degradation. This is ATP-dependent Clp protease adapter protein ClpS from Pseudomonas fluorescens (strain SBW25).